Here is a 143-residue protein sequence, read N- to C-terminus: MAPKKKVSALIKLQIQAGKANPAPPLGPALGSHGVNIMDFCKAYNAQTQDKMGQVIPVEITVYEDRSFTFVLKTPPAAALLKKAAGVEKGTENPLTHKVGSVTKAQVREIAEIKMEDLSARDIEAGMKIIEGTARSMGITVTD.

The protein belongs to the universal ribosomal protein uL11 family. In terms of assembly, part of the ribosomal stalk of the 50S ribosomal subunit. Interacts with L10 and the large rRNA to form the base of the stalk. L10 forms an elongated spine to which L12 dimers bind in a sequential fashion forming a multimeric L10(L12)X complex. One or more lysine residues are methylated.

In terms of biological role, forms part of the ribosomal stalk which helps the ribosome interact with GTP-bound translation factors. The protein is Large ribosomal subunit protein uL11 of Bifidobacterium longum (strain DJO10A).